We begin with the raw amino-acid sequence, 181 residues long: MSLDNLTIASRYSKALFELAVEKDQTEAFLAELKQLRQVFVDNPQLAEVLSGSLLPVDQKQTTLSTLTDHASEYIKNFIQMLYDYGRMSNLVGIVDAFEARFDESRKIVHAEVTSAVKLSDEQADAIAKAFAKRVGANQVVLSRKVDEAIIGGVIVKSNNQTFDGSVALQLTNLRRALINN.

The protein belongs to the ATPase delta chain family. F-type ATPases have 2 components, F(1) - the catalytic core - and F(0) - the membrane proton channel. F(1) has five subunits: alpha(3), beta(3), gamma(1), delta(1), epsilon(1). F(0) has three main subunits: a(1), b(2) and c(10-14). The alpha and beta chains form an alternating ring which encloses part of the gamma chain. F(1) is attached to F(0) by a central stalk formed by the gamma and epsilon chains, while a peripheral stalk is formed by the delta and b chains.

It localises to the cell membrane. Its function is as follows. F(1)F(0) ATP synthase produces ATP from ADP in the presence of a proton or sodium gradient. F-type ATPases consist of two structural domains, F(1) containing the extramembraneous catalytic core and F(0) containing the membrane proton channel, linked together by a central stalk and a peripheral stalk. During catalysis, ATP synthesis in the catalytic domain of F(1) is coupled via a rotary mechanism of the central stalk subunits to proton translocation. This protein is part of the stalk that links CF(0) to CF(1). It either transmits conformational changes from CF(0) to CF(1) or is implicated in proton conduction. This is ATP synthase subunit delta from Lactiplantibacillus plantarum (strain ATCC BAA-793 / NCIMB 8826 / WCFS1) (Lactobacillus plantarum).